A 331-amino-acid chain; its full sequence is UDP-GalNAc:beta-1,3-N-acetylgalactosaminyltransferase 1 (331 aa).

Topologically, residues 1–20 (MAPAVLTALPNRMSLRSLKW) are cytoplasmic. A helical; Signal-anchor for type II membrane protein transmembrane segment spans residues 21-43 (SLLLLSLLSFLVIWYLSLPHYNV). Residues 44–331 (IERVNWMYFY…VMLRNTTCHY (288 aa)) lie on the Lumenal side of the membrane. 5 N-linked (GlcNAc...) asparagine glycosylation sites follow: asparagine 72, asparagine 154, asparagine 198, asparagine 212, and asparagine 326.

This sequence belongs to the glycosyltransferase 31 family. Requires Mg(2+) as cofactor. Detected in brain, ovary, kidney, uterus and stomach. In ovary, specifically expressed in follicular granulosa cells and shows particularly strong expression at later stages of follicle development.

It localises to the golgi apparatus membrane. It catalyses the reaction a globoside Gb3Cer (d18:1(4E)) + UDP-N-acetyl-alpha-D-galactosamine = a globoside Gb4Cer (d18:1(4E)) + UDP + H(+). The protein operates within protein modification; protein glycosylation. In terms of biological role, transfers N-acetylgalactosamine onto globotriaosylceramide. Plays a critical role in preimplantation stage embryonic development. This is UDP-GalNAc:beta-1,3-N-acetylgalactosaminyltransferase 1 from Mus musculus (Mouse).